A 149-amino-acid polypeptide reads, in one-letter code: Arginine repressor (149 aa).

Belongs to the ArgR family.

The protein resides in the cytoplasm. It participates in amino-acid biosynthesis; L-arginine biosynthesis [regulation]. Functionally, regulates arginine biosynthesis genes. The chain is Arginine repressor from Chlorobaculum parvum (strain DSM 263 / NCIMB 8327) (Chlorobium vibrioforme subsp. thiosulfatophilum).